Here is a 343-residue protein sequence, read N- to C-terminus: Putative trace amine-associated receptor 3 (343 aa).

Topologically, residues M1 to V35 are extracellular. A helical membrane pass occupies residues F36–I56. The Cytoplasmic portion of the chain corresponds to S57–F68. The helical transmembrane segment at L69 to I89 threads the bilayer. Topologically, residues M90 to Q150 are extracellular. Residues C104 and C189 are joined by a disulfide bond. N-linked (GlcNAc...) asparagine glycosylation is present at N145. Residues L151–L168 form a helical membrane-spanning segment. The Cytoplasmic portion of the chain corresponds to S169–D172. An extracellular Loop 2 (ECL2) region spans residues V173–F186. A helical membrane pass occupies residues V173 to F193. Topologically, residues N194 to G198 are extracellular. Residues T199–V223 traverse the membrane as a helical segment. Over S224–T257 the chain is Cytoplasmic. A helical transmembrane segment spans residues L258–I278. The Extracellular portion of the chain corresponds to D279 to P287. The helical transmembrane segment at I288–I308 threads the bilayer. At H309–H343 the chain is on the cytoplasmic side.

It belongs to the G-protein coupled receptor 1 family. Not expressed in the pons, thalamus, globus pallidus, caudate, putamen or cerebellum.

Its subcellular location is the cell membrane. In terms of biological role, putative olfactory receptor activated by several primary trace amines. This chain is Putative trace amine-associated receptor 3, found in Homo sapiens (Human).